A 650-amino-acid chain; its full sequence is Chaperone protein DnaK (650 aa).

Thr200 is modified (phosphothreonine; by autocatalysis). Residues 612–636 (QQAGAAGAAGAAEGAAHAGGAQQAA) are compositionally biased toward low complexity. Residues 612-650 (QQAGAAGAAGAAEGAAHAGGAQQAADDVVDAEFKEVKKD) are disordered.

This sequence belongs to the heat shock protein 70 family.

Its function is as follows. Acts as a chaperone. This chain is Chaperone protein DnaK, found in Burkholderia ambifaria (strain ATCC BAA-244 / DSM 16087 / CCUG 44356 / LMG 19182 / AMMD) (Burkholderia cepacia (strain AMMD)).